We begin with the raw amino-acid sequence, 193 residues long: Ion-translocating oxidoreductase complex subunit A (193 aa).

6 helical membrane passes run 5–25 (LLLL…FLGL), 39–59 (IGMG…SYLI), 63–83 (ILAP…VIAV), 102–122 (VLGI…VALL), 134–154 (IIYG…FSAM), and 171–191 (SIAM…TGLV).

The protein belongs to the NqrDE/RnfAE family. As to quaternary structure, the complex is composed of six subunits: RnfA, RnfB, RnfC, RnfD, RnfE and RnfG.

It localises to the cell inner membrane. Functionally, part of a membrane-bound complex that couples electron transfer with translocation of ions across the membrane. The chain is Ion-translocating oxidoreductase complex subunit A from Aliivibrio salmonicida (strain LFI1238) (Vibrio salmonicida (strain LFI1238)).